The chain runs to 169 residues: Peptide methionine sulfoxide reductase MsrA (169 aa).

Residue cysteine 10 is part of the active site.

Belongs to the MsrA Met sulfoxide reductase family.

It carries out the reaction L-methionyl-[protein] + [thioredoxin]-disulfide + H2O = L-methionyl-(S)-S-oxide-[protein] + [thioredoxin]-dithiol. It catalyses the reaction [thioredoxin]-disulfide + L-methionine + H2O = L-methionine (S)-S-oxide + [thioredoxin]-dithiol. Its function is as follows. Has an important function as a repair enzyme for proteins that have been inactivated by oxidation. Catalyzes the reversible oxidation-reduction of methionine sulfoxide in proteins to methionine. The chain is Peptide methionine sulfoxide reductase MsrA from Streptococcus pyogenes serotype M28 (strain MGAS6180).